Reading from the N-terminus, the 2543-residue chain is Zinc finger FYVE domain-containing protein 26 (2543 aa).

At serine 297 the chain carries Phosphoserine. Disordered stretches follow at residues 523–545 (ECRDSPSEDPALAAEPANDSLSS), 609–636 (GLLGLRSPSESPQHIAQPERKSEQGCQE), 699–722 (LSSHSPPEKPKLPEGQSCSGSRDG), and 744–820 (VTSN…GRLQ). Residues serine 615, serine 619, and serine 703 each carry the phosphoserine modification. A compositionally biased stretch (basic and acidic residues) spans 699 to 710 (LSSHSPPEKPKL). Basic residues predominate over residues 767-776 (SLRRGRRTRR). A compositionally biased stretch (low complexity) spans 786-806 (SNPSLESTSSELSTSTSEGSL). Serine 802 is modified (phosphoserine). Positions 870-897 (MFMERYQEVIQELSRVEHKIENQNSDGG) form a coiled coil. Residues 1272–1299 (LSTLSSPKPTGNSTLERKPHSSPRDSSL) are disordered. The segment covering 1273–1285 (STLSSPKPTGNST) has biased composition (polar residues). Phosphoserine is present on residues serine 1744, serine 1765, serine 1784, and serine 1786. Residues 1780 to 1812 (STIHSPSPRERSFPESQPPPEFVPPATPPGRPQ) form a disordered region. Pro residues predominate over residues 1795-1810 (SQPPPEFVPPATPPGR). The FYVE-type zinc finger occupies 1816–1876 (DESASICMVC…VCDQCYSYYN (61 aa)). Cysteine 1822, cysteine 1825, cysteine 1839, cysteine 1842, cysteine 1847, cysteine 1850, cysteine 1868, and cysteine 1871 together coordinate Zn(2+).

The protein belongs to the ZFYVE26 family. As to quaternary structure, interacts with AP5Z1, AP5B1, AP5S1 and SPG11. Interacts with TTC19 and KIF13A.

The protein resides in the cytoplasm. It localises to the cytoskeleton. Its subcellular location is the microtubule organizing center. It is found in the centrosome. The protein localises to the midbody. In terms of biological role, phosphatidylinositol 3-phosphate-binding protein required for the abscission step in cytokinesis: recruited to the midbody during cytokinesis and acts as a regulator of abscission. May also be required for efficient homologous recombination DNA double-strand break repair. In Ailuropoda melanoleuca (Giant panda), this protein is Zinc finger FYVE domain-containing protein 26 (ZFYVE26).